The chain runs to 88 residues: Small cysteine-rich outer membrane protein OmcA (88 aa).

An N-terminal signal peptide occupies residues 1 to 18; sequence MKKTALLAALCSVVSLSS. C19 is lipidated: N-palmitoyl cysteine. C19 carries S-diacylglycerol cysteine lipidation. Residues 67-88 form a disordered region; that stretch reads THQDAEHGPQAREIPVDGKCRQ.

In terms of assembly, part of a disulfide cross-linked outer membrane complex (COMC) composed of the major outer membrane porin (MOMP), the small cysteine-rich protein (OmcA) and the large cysteine-rich periplasmic protein (OmcB).

The protein localises to the cell outer membrane. In terms of biological role, in elementary bodies (EBs, the infectious stage, which is able to survive outside the host cell) provides the structural integrity of the outer envelope through disulfide cross-links with the large cysteine-rich periplasmic protein and the major outer membrane porin. It has been described in publications as the Sarkosyl-insoluble COMC (Chlamydia outer membrane complex), and serves as the functional equivalent of peptidoglycan. This Chlamydia trachomatis serovar L2 (strain ATCC VR-902B / DSM 19102 / 434/Bu) protein is Small cysteine-rich outer membrane protein OmcA (omcA).